The primary structure comprises 399 residues: S-adenosylmethionine synthase (399 aa).

Residue H19 coordinates ATP. D21 is a binding site for Mg(2+). K(+) is bound at residue E47. Residues E60 and Q103 each contribute to the L-methionine site. The interval 103–113 is flexible loop; that stretch reads QSPDIAQGVNQ. ATP-binding positions include 179–181, 246–247, D255, 261–262, A278, and K282; these read DGK, RF, and RK. L-methionine is bound at residue D255. An L-methionine-binding site is contributed by K286.

Belongs to the AdoMet synthase family. Homotetramer; dimer of dimers. The cofactor is Mg(2+). K(+) is required as a cofactor.

The protein resides in the cytoplasm. The enzyme catalyses L-methionine + ATP + H2O = S-adenosyl-L-methionine + phosphate + diphosphate. The protein operates within amino-acid biosynthesis; S-adenosyl-L-methionine biosynthesis; S-adenosyl-L-methionine from L-methionine: step 1/1. Its function is as follows. Catalyzes the formation of S-adenosylmethionine (AdoMet) from methionine and ATP. The overall synthetic reaction is composed of two sequential steps, AdoMet formation and the subsequent tripolyphosphate hydrolysis which occurs prior to release of AdoMet from the enzyme. The polypeptide is S-adenosylmethionine synthase (Halalkalibacterium halodurans (strain ATCC BAA-125 / DSM 18197 / FERM 7344 / JCM 9153 / C-125) (Bacillus halodurans)).